The primary structure comprises 159 residues: Small ribosomal subunit protein uS4 (159 aa).

Residues 106–158 (RRLQTIVYRMGLAKSIHHARQLIVHGHVAVAGRRVTSPGFLVPRELEDKISLI) form the S4 RNA-binding domain.

Belongs to the universal ribosomal protein uS4 family. Part of the 30S ribosomal subunit. Contacts protein S5. The interaction surface between S4 and S5 is involved in control of translational fidelity.

Its function is as follows. One of the primary rRNA binding proteins, it binds directly to 16S rRNA where it nucleates assembly of the body of the 30S subunit. In terms of biological role, with S5 and S12 plays an important role in translational accuracy. The polypeptide is Small ribosomal subunit protein uS4 (Pyrobaculum aerophilum (strain ATCC 51768 / DSM 7523 / JCM 9630 / CIP 104966 / NBRC 100827 / IM2)).